Reading from the N-terminus, the 834-residue chain is RNA-binding protein 12B-B (834 aa).

Residues 154-229 (PYLFLRGLPY…RFIEVMQGSE (76 aa)) enclose the RRM 1 domain. Residues 237 to 277 (GTATEGGDTPRMRSEEHSPSRRINGRHFRKRSHSKSPRARS) form a disordered region. The span at 244-255 (DTPRMRSEEHSP) shows a compositional bias: basic and acidic residues. The segment covering 259–277 (INGRHFRKRSHSKSPRARS) has biased composition (basic residues). RRM domains lie at 283 to 359 (FYVH…PVSR) and 401 to 478 (LCIY…LISE). Disordered stretches follow at residues 546–572 (GYFR…PWEE) and 621–643 (HFRR…RSRE). Positions 550-572 (QSDRCSPEDFRHSPEDYRHPWEE) are enriched in basic and acidic residues. Position 701 is a phosphoserine (Ser-701). The region spanning 758 to 834 (IRVMISNLPF…GPRKVKLSLL (77 aa)) is the RRM 4 domain.

In Mus musculus (Mouse), this protein is RNA-binding protein 12B-B (Rbm12b2).